The following is a 346-amino-acid chain: Endosome-associated-trafficking regulator 1 (346 aa).

Residues 46 to 67 (FVSSNSKRAFSKDSNQSTTQFR) are compositionally biased toward polar residues. Disordered stretches follow at residues 46-77 (FVSSNSKRAFSKDSNQSTTQFRGPSECPDGNL), 93-129 (LQEDEDDDWSGSYHPSVIENTHGPKVPSPAGTDGDES), and 153-173 (SPPAGLHGKTQHRPDSTSDSE). The stretch at 170–317 (SDSEEGLRLL…SGAQSSIKQL (148 aa)) forms a coiled coil.

It belongs to the ENTR1 family.

The protein resides in the cytoplasm. It localises to the early endosome. Its subcellular location is the endosome. The protein localises to the recycling endosome. It is found in the midbody. The protein resides in the cytoskeleton. It localises to the microtubule organizing center. Its subcellular location is the centrosome. The protein localises to the cilium basal body. Functionally, endosome-associated protein that plays a role in membrane receptor sorting, cytokinesis and ciliogenesis. The chain is Endosome-associated-trafficking regulator 1 from Xenopus tropicalis (Western clawed frog).